The primary structure comprises 138 residues: Small ribosomal subunit protein uS11c (138 aa).

The interval 1–22 is disordered; it reads MAKPILRVGSRKNTRSASRKNV. The span at 9 to 22 shows a compositional bias: basic residues; it reads GSRKNTRSASRKNV.

This sequence belongs to the universal ribosomal protein uS11 family. As to quaternary structure, part of the 30S ribosomal subunit.

Its subcellular location is the plastid. It localises to the chloroplast. This chain is Small ribosomal subunit protein uS11c, found in Draba nemorosa (Woodland whitlowgrass).